We begin with the raw amino-acid sequence, 455 residues long: E3 ubiquitin-protein ligase IPI1 (455 aa).

Residues 1-42 (MGAEEEEEPASAVGREGGGGGGGARAAGAGAGGDTADDDDSG) are disordered. Residues 15-33 (REGGGGGGGARAAGAGAGG) show a composition bias toward gly residues. Residues 51-97 (CSICLDAVVAGGGDRSTARLQCGHEFHLDCIGSAFNAKGVMQCPNCR) form an RING-type; atypical zinc finger. Disordered stretches follow at residues 286–311 (LDSD…SRIP) and 426–455 (QWIG…IPRM). The span at 433–442 (SPPPPPPPPA) shows a compositional bias: pro residues.

Interacts with SPL14/IPA1.

The protein localises to the nucleus. It catalyses the reaction S-ubiquitinyl-[E2 ubiquitin-conjugating enzyme]-L-cysteine + [acceptor protein]-L-lysine = [E2 ubiquitin-conjugating enzyme]-L-cysteine + N(6)-ubiquitinyl-[acceptor protein]-L-lysine.. The protein operates within protein modification; protein ubiquitination. Its function is as follows. Functions as an E3 ligase that promotes polyubiquitination of SPL14/IPA1 for subsequent proteasomal degradation. Regulates plant architecture by modulating SPL14/IPA1 abundance. Promotes the degradation of SPL14/IPA1 in panicles, while it stabilizes SPL14/IPA1 in shoot apices. Ubiquitinates the SPL14/IPA1-mediated complex with 'Lys-48'-linked polyubiquitin in panicles and 'Lys-63'-linked polyubiquitin chains in the shoot apex. In Oryza sativa subsp. japonica (Rice), this protein is E3 ubiquitin-protein ligase IPI1.